A 196-amino-acid chain; its full sequence is Probable GTP-binding protein EngB (196 aa).

Residues 21–195 enclose the EngB-type G domain; that stretch reads DVSEICLIGR…YELINKLLGS (175 aa). GTP contacts are provided by residues 29–36, 56–60, 75–78, 142–145, and 174–176; these read GRSNVGKS, GKTRL, DAPG, TKLD, and ISN. Ser36 and Thr58 together coordinate Mg(2+).

The protein belongs to the TRAFAC class TrmE-Era-EngA-EngB-Septin-like GTPase superfamily. EngB GTPase family. It depends on Mg(2+) as a cofactor.

Necessary for normal cell division and for the maintenance of normal septation. The polypeptide is Probable GTP-binding protein EngB (Mycoplasma capricolum subsp. capricolum (strain California kid / ATCC 27343 / NCTC 10154)).